The following is a 291-amino-acid chain: ATP phosphoribosyltransferase (291 aa).

The protein belongs to the ATP phosphoribosyltransferase family. Long subfamily. Mg(2+) is required as a cofactor.

The protein resides in the cytoplasm. The catalysed reaction is 1-(5-phospho-beta-D-ribosyl)-ATP + diphosphate = 5-phospho-alpha-D-ribose 1-diphosphate + ATP. The protein operates within amino-acid biosynthesis; L-histidine biosynthesis; L-histidine from 5-phospho-alpha-D-ribose 1-diphosphate: step 1/9. Feedback inhibited by histidine. Functionally, catalyzes the condensation of ATP and 5-phosphoribose 1-diphosphate to form N'-(5'-phosphoribosyl)-ATP (PR-ATP). Has a crucial role in the pathway because the rate of histidine biosynthesis seems to be controlled primarily by regulation of HisG enzymatic activity. This chain is ATP phosphoribosyltransferase, found in Geotalea daltonii (strain DSM 22248 / JCM 15807 / FRC-32) (Geobacter daltonii).